Reading from the N-terminus, the 452-residue chain is Friend leukemia integration 1 transcription factor (452 aa).

Ser-39 is subject to Phosphoserine. The 87-residue stretch at 112–198 (PPPPNMTTNE…SHLTYLRESS (87 aa)) folds into the PNT domain. The segment covering 202–214 (YNTTSHTDPSSRL) has biased composition (polar residues). Residues 202–272 (YNTTSHTDPS…YQILGPTSSR (71 aa)) form a disordered region. Basic and acidic residues predominate over residues 215 to 226 (NVKEDPSYDSVR). The span at 248 to 257 (QTMSKNTEQR) shows a compositional bias: polar residues. The segment at residues 281-361 (IQLWQFLLEL…HGKRYAYKFD (81 aa)) is a DNA-binding region (ETS).

Belongs to the ETS family. Can form homodimers or heterodimers with ETV6/TEL1.

It localises to the nucleus. Its function is as follows. Sequence-specific transcriptional activator. Recognizes the DNA sequence 5'-C[CA]GGAAGT-3'. This chain is Friend leukemia integration 1 transcription factor (FLI1), found in Bos taurus (Bovine).